We begin with the raw amino-acid sequence, 449 residues long: Glutamate--tRNA ligase 2 (449 aa).

The 'HIGH' region motif lies at 11–21 (PSPTGFLHIGN). The 'KMSKS' region signature appears at 242 to 246 (GLSKR). Position 245 (lysine 245) interacts with ATP.

The protein belongs to the class-I aminoacyl-tRNA synthetase family. Glutamate--tRNA ligase type 1 subfamily. Monomer.

The protein localises to the cytoplasm. The catalysed reaction is tRNA(Glu) + L-glutamate + ATP = L-glutamyl-tRNA(Glu) + AMP + diphosphate. Its function is as follows. Catalyzes the attachment of glutamate to tRNA(Glu) in a two-step reaction: glutamate is first activated by ATP to form Glu-AMP and then transferred to the acceptor end of tRNA(Glu). The chain is Glutamate--tRNA ligase 2 from Methylorubrum populi (strain ATCC BAA-705 / NCIMB 13946 / BJ001) (Methylobacterium populi).